Here is a 594-residue protein sequence, read N- to C-terminus: Probable ABC transporter-binding protein DR_1571 (594 aa).

Positions 1-18 (MKKVMMLALALGASTSLA) are cleaved as a signal peptide.

This sequence belongs to the bacterial solute-binding protein 5 family.

Probably part of a binding-protein-dependent transport system. The sequence is that of Probable ABC transporter-binding protein DR_1571 from Deinococcus radiodurans (strain ATCC 13939 / DSM 20539 / JCM 16871 / CCUG 27074 / LMG 4051 / NBRC 15346 / NCIMB 9279 / VKM B-1422 / R1).